We begin with the raw amino-acid sequence, 619 residues long: Polyadenylate-binding protein 1-like (619 aa).

RRM domains are found at residues 11–89, 99–175, 191–268, and 294–370; these read ASLY…WSQR, GNIF…HFKS, TNIY…RAQK, and VNLY…LAQR. The disordered stretch occupies residues 431–458; that stretch reads PAPRWTSQPPRPSSAYPPGASMVRPPVV. The region spanning 533–610 is the PABC domain; it reads QEPLTASMLA…AVAVLQAHQA (78 aa).

The protein belongs to the polyadenylate-binding protein type-1 family. As to expression, expressed in ovary and testis. Also expressed in pancreas, liver and thymus, and at lower levels in other somatic tissues including brain and lung.

The protein localises to the cytoplasm. Poly(A)-binding protein involved in oocyte maturation and early embryo development. It is required for cytosolic mRNA polyadenylation and translational activation of maternally stored mRNA in oocytes. This Homo sapiens (Human) protein is Polyadenylate-binding protein 1-like.